The following is a 689-amino-acid chain: Chloride channel protein ClC-Kb (689 aa).

Residues 1–51 (MSRVLVIEQREGEEKTLIQKHIFRPFPNTRRVVIDHLQRLKNFLFRIGDDW) lie on the Cytoplasmic side of the membrane. Transmembrane regions (helical) follow at residues 52-83 (YFLFALGVIMALISFTMDFTVSKMLNAHRWLQ) and 92-112 (LRYLSWIVYPIALVAFSTGFA). Positions 117-128 (PHSGGSGIPELK) form an intramembrane region, helical. Residue serine 122 coordinates chloride. Transmembrane regions (helical) follow at residues 142–161 (IKNFGAKVVGLTCTLSAGST) and 162–181 (MFLGKVGPFVHLSSMIAAYL). Asparagine 194 carries an N-linked (GlcNAc...) asparagine glycan. The segment at residues 204–225 (AAAAVGVSTVFGAPISGVLFSV) is an intramembrane region (helical). The chain crosses the membrane as a helical span at residues 237-256 (YWRGFFAATCGAFVFRLLAV). Glutamate 260, glutamate 262, aspartate 279, and glutamate 282 together coordinate Ca(2+). 2 helical membrane passes run 283 to 311 (MFFFAILGVVCGLIGCAYLFCQRWLLGYV) and 326 to 343 (PMYSALVALLISSITFPE). The helical intramembrane region spans 350–361 (ASRLTMKELLTS). 2 consecutive transmembrane segments (helical) span residues 402–422 (GTLAFFIIMKFWMFILATTLP) and 423–442 (MPAGYFMPVFVFGAAIGRLV). Phenylalanine 428 serves as a coordination point for chloride. Positions 466 to 498 (GGYAWQGAPAYSGAVTHSVSTALLAFEATGQIA) form an intramembrane region, helical. The chain crosses the membrane as a helical span at residues 502–522 (PVILCVLIANAFTQKLQPSFY). The Cytoplasmic portion of the chain corresponds to 523–689 (DGTIIVKKLP…KAIEDLANPK (167 aa)). 2 CBS domains span residues 553-613 (MNPD…SHER) and 630-689 (ACSI…ANPK).

Belongs to the chloride channel (TC 2.A.49) family. Post-translationally, N-glycosylated on a single asparagine, probably Asn-365 or Asn-375. Expressed in two distinct regions of the kidney; the proximal convoluted tubule and the diluting segment.

It is found in the cell membrane. Functionally, voltage-gated chloride channel. Chloride channels have several functions including the regulation of cell volume, the stabilization of membrane potential, signal transduction and transepithelial transport. The sequence is that of Chloride channel protein ClC-Kb (clcnkb) from Xenopus laevis (African clawed frog).